Here is a 188-residue protein sequence, read N- to C-terminus: Protein YecM (188 aa).

To H.influenzae HI_1582/HI_1581.

The protein is Protein YecM (yecM) of Escherichia coli (strain K12).